A 122-amino-acid polypeptide reads, in one-letter code: Large ribosomal subunit protein uL14 (122 aa).

This sequence belongs to the universal ribosomal protein uL14 family. As to quaternary structure, part of the 50S ribosomal subunit. Forms a cluster with proteins L3 and L19. In the 70S ribosome, L14 and L19 interact and together make contacts with the 16S rRNA in bridges B5 and B8.

In terms of biological role, binds to 23S rRNA. Forms part of two intersubunit bridges in the 70S ribosome. The chain is Large ribosomal subunit protein uL14 from Allorhizobium ampelinum (strain ATCC BAA-846 / DSM 112012 / S4) (Agrobacterium vitis (strain S4)).